The following is a 236-amino-acid chain: Small ribosomal subunit protein uS2c (236 aa).

The protein belongs to the universal ribosomal protein uS2 family.

Its subcellular location is the plastid. This is Small ribosomal subunit protein uS2c (rps2) from Cuscuta exaltata (Tall dodder).